The primary structure comprises 410 residues: Tryptophan synthase beta chain (410 aa).

The residue at position 98 (K98) is an N6-(pyridoxal phosphate)lysine.

It belongs to the TrpB family. As to quaternary structure, tetramer of two alpha and two beta chains. Requires pyridoxal 5'-phosphate as cofactor.

The catalysed reaction is (1S,2R)-1-C-(indol-3-yl)glycerol 3-phosphate + L-serine = D-glyceraldehyde 3-phosphate + L-tryptophan + H2O. It functions in the pathway amino-acid biosynthesis; L-tryptophan biosynthesis; L-tryptophan from chorismate: step 5/5. The beta subunit is responsible for the synthesis of L-tryptophan from indole and L-serine. In Dinoroseobacter shibae (strain DSM 16493 / NCIMB 14021 / DFL 12), this protein is Tryptophan synthase beta chain.